A 1593-amino-acid chain; its full sequence is Laminin subunit gamma-1 (1593 aa).

An N-terminal signal peptide occupies residues 1 to 19 (MSLFSCLLLWTLWAACSHG). In terms of domain architecture, Laminin N-terminal spans 30 to 269 (RPQRCMPEFV…AISDFAVGGR (240 aa)). N-linked (GlcNAc...) asparagine glycosylation is found at asparagine 44 and asparagine 118. 16 disulfide bridges follow: cysteine 270–cysteine 279, cysteine 272–cysteine 289, cysteine 291–cysteine 300, cysteine 303–cysteine 323, cysteine 326–cysteine 335, cysteine 328–cysteine 351, cysteine 354–cysteine 363, cysteine 366–cysteine 379, cysteine 382–cysteine 394, cysteine 384–cysteine 400, cysteine 402–cysteine 411, cysteine 414–cysteine 426, cysteine 429–cysteine 440, cysteine 431–cysteine 447, cysteine 449–cysteine 458, and cysteine 461–cysteine 476. Laminin EGF-like domains follow at residues 270–325 (CKCN…ECLP), 326–381 (CNCN…RCLS), 382–428 (CGCN…GCRP), and 429–478 (CSCN…GCTP). A Laminin IV type A domain is found at 505-673 (RDDEGWKGKQ…PGTPARWVEK (169 aa)). N-linked (GlcNAc...) asparagine glycans are attached at residues asparagine 560, asparagine 634, and asparagine 654. 24 disulfides stabilise this stretch: cysteine 708–cysteine 717, cysteine 710–cysteine 724, cysteine 726–cysteine 735, cysteine 738–cysteine 754, cysteine 757–cysteine 765, cysteine 759–cysteine 776, cysteine 779–cysteine 788, cysteine 791–cysteine 809, cysteine 812–cysteine 826, cysteine 814–cysteine 833, cysteine 836–cysteine 845, cysteine 848–cysteine 865, cysteine 868–cysteine 882, cysteine 870–cysteine 889, cysteine 891–cysteine 900, cysteine 903–cysteine 916, cysteine 919–cysteine 931, cysteine 921–cysteine 938, cysteine 940–cysteine 949, cysteine 952–cysteine 964, cysteine 967–cysteine 979, cysteine 969–cysteine 985, cysteine 987–cysteine 996, and cysteine 999–cysteine 1012. Laminin EGF-like domains are found at residues 708-756 (CNCN…DCKA), 757-811 (CPCP…ACRA), 812-867 (CSCN…KCKP), 868-918 (CKCS…GCER), 919-966 (CNCN…GCKP), and 967-1014 (CDCD…GCQQ). 8 N-linked (GlcNAc...) asparagine glycosylation sites follow: asparagine 1006, asparagine 1091, asparagine 1159, asparagine 1189, asparagine 1207, asparagine 1254, asparagine 1364, and asparagine 1379. Positions 1014–1593 (QCPNCYSLVR…CFNTPSLERP (580 aa)) are domain II and I. Residues 1021–1580 (LVRDKVNQQR…ANLNDIKNTL (560 aa)) adopt a coiled-coil conformation.

As to quaternary structure, laminin is a complex glycoprotein, consisting of three different polypeptide chains (alpha, beta, gamma), which are bound to each other by disulfide bonds into a cross-shaped molecule comprising one long and three short arms with globules at each end.

It localises to the secreted. The protein resides in the extracellular space. Its subcellular location is the extracellular matrix. The protein localises to the basement membrane. Its function is as follows. Binding to cells via a high affinity receptor, laminin is thought to mediate the attachment, migration and organization of cells into tissues during embryonic development by interacting with other extracellular matrix components. The chain is Laminin subunit gamma-1 (lamc1) from Danio rerio (Zebrafish).